Here is a 437-residue protein sequence, read N- to C-terminus: Doublesex- and mab-3-related transcription factor A2 (437 aa).

A DNA-binding region (DM) is located at residues 49-96 (CARCRNHGVVSALKGHKRYCRWKDCMCAKCTLIAERQRVMAAQVALRR). Disordered stretches follow at residues 163–254 (SVTP…ARQR) and 297–317 (DKSE…PSVS). Composition is skewed to low complexity over residues 179-201 (SESV…SGSE) and 223-235 (SPSS…SESG). Residues 254–289 (RTPIDILTRVFPAQKRSVLELVLQGCGGDVVQAIEQ) enclose the DMA domain.

This sequence belongs to the DMRT family.

The protein resides in the nucleus. In terms of biological role, may be involved in sexual development. The chain is Doublesex- and mab-3-related transcription factor A2 (dmrta2) from Xenopus tropicalis (Western clawed frog).